The sequence spans 359 residues: ATP-dependent 6-phosphofructokinase 1 (359 aa).

ATP-binding positions include G14, 78–79 (KG), and 115–118 (GDGS). D116 is a Mg(2+) binding site. Residues 139-141 (TID), R176, 183-185 (MGR), E236, R277, and 283-286 (HIQR) each bind substrate. Residue D141 is the Proton acceptor of the active site.

This sequence belongs to the phosphofructokinase type A (PFKA) family. Mixed-substrate PFK group III subfamily. Homodimer or homotetramer. It depends on Mg(2+) as a cofactor.

The protein resides in the cytoplasm. It carries out the reaction beta-D-fructose 6-phosphate + ATP = beta-D-fructose 1,6-bisphosphate + ADP + H(+). The protein operates within carbohydrate degradation; glycolysis; D-glyceraldehyde 3-phosphate and glycerone phosphate from D-glucose: step 3/4. In terms of biological role, catalyzes the phosphorylation of D-fructose 6-phosphate to fructose 1,6-bisphosphate by ATP, the first committing step of glycolysis. In Nostoc sp. (strain PCC 7120 / SAG 25.82 / UTEX 2576), this protein is ATP-dependent 6-phosphofructokinase 1.